Reading from the N-terminus, the 508-residue chain is RanBP-type and C3HC4-type zinc finger-containing protein 1 (508 aa).

An N-acetylmethionine modification is found at Met1. The interaction with IRF3 stretch occupies residues Met1–Arg218. Residues Met1–Gln268 form an interaction with TAB2 region. Residue Ser50 is modified to Phosphoserine. The region spanning Ile55–Ile119 is the Ubiquitin-like domain. The interaction with RNF31 stretch occupies residues Val69–Leu131. Positions Thr161–Pro191 are disordered. Residues Pro188–Glu220 form a RanBP2-type zinc finger. Residues Asp231 to Tyr260 adopt a coiled-coil conformation. Positions Glu276–Cys504 are TRIAD supradomain. 7 residues coordinate Zn(2+): Cys280, Cys283, Cys298, His300, Cys303, Cys306, and Cys321. An RING-type 1 zinc finger spans residues Cys280–Cys330. Tyr328 is modified (phosphotyrosine). 11 residues coordinate Zn(2+): Cys330, Cys369, Cys374, Cys389, Cys392, Cys397, Cys400, His404, Cys409, Cys445, and Cys448. An IBR-type zinc finger spans residues Gln349–Cys409. An RING-type 2; atypical zinc finger spans residues Cys445–Thr474. The active site involves Cys458. Residues Cys463 and Cys466 each coordinate Zn(2+).

This sequence belongs to the RBR family. In terms of assembly, component of the LUBAC complex (linear ubiquitin chain assembly complex) which consists of SHARPIN, RBCK1 and RNF31. LUBAC has a MW of approximately 600 kDa suggesting a heteromultimeric assembly of its subunits. Interacts with beta-I-type (PRKCB1) and zeta-type protein kinase C (PRKCZ). Interacts with UBE2L3. Interacts with IREB2 only in iron-rich conditions. Associates with the TNF-R1 signaling complex (TNF-RSC) in a stimulation-dependent manner. Interacts with EYA1, TAB2, TAB3, MAP3K7 TRAF6 and RIPK1. Interacts with IRF3. Post-translationally, auto-ubiquitinated. Auto-ubiquitination leads to degradation by the proteasome. In terms of processing, phosphorylated. In vitro, phosphorylation inhibits auto-ubiquitination activity. As to expression, widely expressed.

The enzyme catalyses [E2 ubiquitin-conjugating enzyme]-S-ubiquitinyl-L-cysteine + [acceptor protein]-L-lysine = [E2 ubiquitin-conjugating enzyme]-L-cysteine + [acceptor protein]-N(6)-ubiquitinyl-L-lysine.. It participates in protein modification; protein ubiquitination. E3 ubiquitin-protein ligase, which accepts ubiquitin from specific E2 ubiquitin-conjugating enzymes, such as UBE2L3/UBCM4, and then transfers it to substrates. Functions as an E3 ligase for oxidized IREB2 and both heme and oxygen are necessary for IREB2 ubiquitination. Promotes ubiquitination of TAB2 and IRF3 and their degradation by the proteasome. Component of the LUBAC complex which conjugates linear ('Met-1'-linked) polyubiquitin chains to substrates and plays a key role in NF-kappa-B activation and regulation of inflammation. LUBAC conjugates linear polyubiquitin to IKBKG and RIPK1 and is involved in activation of the canonical NF-kappa-B and the JNK signaling pathways. Linear ubiquitination mediated by the LUBAC complex interferes with TNF-induced cell death and thereby prevents inflammation. LUBAC is recruited to the TNF-R1 signaling complex (TNF-RSC) following polyubiquitination of TNF-RSC components by BIRC2 and/or BIRC3 and to conjugate linear polyubiquitin to IKBKG and possibly other components contributing to the stability of the complex. The LUBAC complex is also involved in innate immunity by conjugating linear polyubiquitin chains at the surface of bacteria invading the cytosol to form the ubiquitin coat surrounding bacteria. LUBAC is not able to initiate formation of the bacterial ubiquitin coat, and can only promote formation of linear polyubiquitins on pre-existing ubiquitin. The bacterial ubiquitin coat acts as an 'eat-me' signal for xenophagy and promotes NF-kappa-B activation. Together with OTULIN, the LUBAC complex regulates the canonical Wnt signaling during angiogenesis. Binds polyubiquitin of different linkage types. This Rattus norvegicus (Rat) protein is RanBP-type and C3HC4-type zinc finger-containing protein 1 (Rbck1).